The following is an 891-amino-acid chain: Extended synaptotagmin-3 (891 aa).

Residues 1–30 (MQPEEPCAPSAPGGPDVPERGQRSRDPGPR) form a disordered region. Residues 1-32 (MQPEEPCAPSAPGGPDVPERGQRSRDPGPRLS) lie on the Cytoplasmic side of the membrane. Residues 17 to 28 (VPERGQRSRDPG) show a composition bias toward basic and acidic residues. A helical membrane pass occupies residues 33–53 (GQLLPELYSFVARVLFYLAPV). Position 54 (tyrosine 54) is a topological domain, lumenal. Residues 55–75 (LAGYLGLSVTWLLLGALLWMW) form a helical membrane-spanning segment. Topologically, residues 76–891 (WRRNRRGKLG…ELTADGQPRS (816 aa)) are cytoplasmic. Residues 118–295 (DVERVEWANK…LPNRVTVPVK (178 aa)) enclose the SMP-LTD domain. C2 domains are found at residues 292 to 412 (VPVK…DEWF) and 430 to 570 (SLLT…QLDH). 9 residues coordinate Ca(2+): lysine 325, aspartate 326, aspartate 336, aspartate 383, glutamate 384, aspartate 385, aspartate 387, aspartate 389, and aspartate 390. Residues 652 to 711 (SAATTDPEPMPEPQGPGPEPKGKDSARGLCESPGKKKNPATTFLTVPGLHSPGPIKSPRP) are disordered. A compositionally biased stretch (pro residues) spans 659–670 (EPMPEPQGPGPE). Residues 759–881 (RLGEIQLTVR…DLIKGFSQWY (123 aa)) enclose the C2 3 domain. The segment at 806 to 813 (RRWASRKK) is required for phosphatidylinositol 4,5-bisphosphate-dependent location at the cell membrane.

This sequence belongs to the extended synaptotagmin family.

It is found in the cell membrane. It localises to the endoplasmic reticulum membrane. Functionally, tethers the endoplasmic reticulum to the cell membrane and promotes the formation of appositions between the endoplasmic reticulum and the cell membrane. Binds glycerophospholipids in a barrel-like domain and may play a role in cellular lipid transport. This chain is Extended synaptotagmin-3 (Esyt3), found in Mus musculus (Mouse).